The chain runs to 219 residues: UPF0502 protein Gura_0277 (219 aa).

It belongs to the UPF0502 family.

The sequence is that of UPF0502 protein Gura_0277 from Geotalea uraniireducens (strain Rf4) (Geobacter uraniireducens).